The chain runs to 342 residues: ATP-dependent (S)-NAD(P)H-hydrate dehydratase (342 aa).

Residues 11–337 (ILPALEKVVP…EYLGHRLFTF (327 aa)) enclose the YjeF C-terminal domain. (6S)-NADPHX-binding positions include Gly-127 and 180–186 (NVMEHKR). ATP-binding positions include 229–233 (KGKTD) and 248–257 (GSPRRCGGQG). Asp-258 contributes to the (6S)-NADPHX binding site.

Belongs to the NnrD/CARKD family. It depends on Mg(2+) as a cofactor.

The enzyme catalyses (6S)-NADHX + ATP = ADP + phosphate + NADH + H(+). It catalyses the reaction (6S)-NADPHX + ATP = ADP + phosphate + NADPH + H(+). Catalyzes the dehydration of the S-form of NAD(P)HX at the expense of ATP, which is converted to ADP. Together with NAD(P)HX epimerase, which catalyzes the epimerization of the S- and R-forms, the enzyme allows the repair of both epimers of NAD(P)HX, a damaged form of NAD(P)H that is a result of enzymatic or heat-dependent hydration. The protein is ATP-dependent (S)-NAD(P)H-hydrate dehydratase of Physcomitrium patens (Spreading-leaved earth moss).